A 162-amino-acid polypeptide reads, in one-letter code: Regulatory protein RecX (162 aa).

This sequence belongs to the RecX family.

It is found in the cytoplasm. Functionally, modulates RecA activity. This chain is Regulatory protein RecX, found in Xanthomonas oryzae pv. oryzae (strain PXO99A).